Reading from the N-terminus, the 89-residue chain is Small ribosomal subunit protein bS20 (89 aa).

The protein belongs to the bacterial ribosomal protein bS20 family.

In terms of biological role, binds directly to 16S ribosomal RNA. The polypeptide is Small ribosomal subunit protein bS20 (Wolbachia sp. subsp. Brugia malayi (strain TRS)).